Here is a 167-residue protein sequence, read N- to C-terminus: Early nodulin-like protein 16 (167 aa).

An N-terminal signal peptide occupies residues 1–24; the sequence is MARVAVLVAGAVLAFLLAATNVTA. A Phytocyanin domain is found at 25 to 126; it reads KRWTVGDNKF…GMKLAVLVEK (102 aa). 4 N-linked (GlcNAc...) asparagine glycosylation sites follow: N40, N71, N86, and N99. C78 and C114 are oxidised to a cystine. N138 carries GPI-anchor amidated asparagine lipidation. A propeptide spans 139 to 167 (removed in mature form); it reads SARRTFSVSGFAYQFLIPVAVFAAVGTRY.

This sequence belongs to the early nodulin-like (ENODL) family.

It localises to the cell membrane. Functionally, may act as a carbohydrate transporter. The sequence is that of Early nodulin-like protein 16 from Arabidopsis thaliana (Mouse-ear cress).